Here is a 65-residue protein sequence, read N- to C-terminus: U15-hexatoxin-Mg1a (65 aa).

Post-translationally, contains 4 disulfide bonds. Expressed by the venom gland.

It localises to the secreted. Its function is as follows. Intrathorax injection into crickets causes paralysis prolonged for more than 60 minutes, followed by recovery. In Macrothele gigas (Japanese funnel web spider), this protein is U15-hexatoxin-Mg1a.